The following is a 1040-amino-acid chain: Activated CDC42 kinase 1 (1040 aa).

An SAM-like domain region spans residues M1–G110. Residues E86–A109 are disordered. T113 bears the Phosphothreonine mark. The 260-residue stretch at L126 to L385 folds into the Protein kinase domain. ATP-binding positions include L132 to V140 and K158. D252 acts as the Proton acceptor in catalysis. Phosphotyrosine; by SRC and autocatalysis is present on Y284. The SH3 domain maps to A388–G448. The tract at residues R505–P527 is disordered. Y518 is subject to Phosphotyrosine. Residues D623 to S652 form a required for interaction with SRC region. Residues P632–Y635 are required for interaction with NEDD4. The segment at T722 to D824 is disordered. An EBD domain region spans residues G733–L876. 2 stretches are compositionally biased toward pro residues: residues Q738 to P749 and P772 to P783. A compositionally biased stretch (low complexity) spans P802–G812. Phosphotyrosine is present on Y827. The residue at position 839 (R839) is an Omega-N-methylarginine. Residues Y859 and Y872 each carry the phosphotyrosine modification. At S881 the chain carries Phosphoserine. Residues S881–R957 form a disordered region. Pro residues predominate over residues L888–A903. Polar residues predominate over residues N922–G931. Residues P958 to E998 enclose the UBA domain.

Belongs to the protein kinase superfamily. Tyr protein kinase family. Homodimer. Interacts with CDC42. Interacts with CSPG4 (activated). Interacts with MERTK (activated); stimulates autophosphorylation. May interact (phosphorylated) with HSP90AB1; maintains kinase activity. Interacts with NPHP1. Interacts with SNX9 (via SH3 domain). Interacts with SRC (via SH2 and SH3 domain). Interacts with EGFR, and this interaction is dependent on EGF stimulation and kinase activity of EGFR. Interacts (via kinase domain) with AKT1. Part of a collagen stimulated complex involved in cell migration composed of CDC42, CRK, TNK2 and BCAR1/p130cas. Interacts with BCAR1/p130cas via SH3 domains. Forms complexes with GRB2 and numerous receptor tyrosine kinases (RTK) including LTK, AXL or PDGFRL, in which GRB2 promotes RTK recruitment by TNK2. Interacts with NEDD4 (via WW3 domain). NEDD4L and EGF promote association with NEDD4. Requires Mg(2+) as cofactor. In terms of processing, autophosphorylation regulates kinase activity. Phosphorylation on Tyr-518 is required for interaction with SRC and is observed during association with clathrin-coated pits. Polyubiquitinated by NEDD4 and NEDD4L. Degradation can be induced by EGF and is lysosome-dependent.

It localises to the cell membrane. The protein resides in the nucleus. The protein localises to the endosome. Its subcellular location is the cell junction. It is found in the adherens junction. It localises to the cytoplasmic vesicle membrane. The protein resides in the cytoplasmic vesicle. The protein localises to the clathrin-coated vesicle. Its subcellular location is the membrane. It is found in the clathrin-coated pit. It localises to the cytoplasm. The protein resides in the cytosol. The enzyme catalyses L-tyrosyl-[protein] + ATP = O-phospho-L-tyrosyl-[protein] + ADP + H(+). It catalyses the reaction L-seryl-[protein] + ATP = O-phospho-L-seryl-[protein] + ADP + H(+). The catalysed reaction is L-threonyl-[protein] + ATP = O-phospho-L-threonyl-[protein] + ADP + H(+). In terms of biological role, non-receptor tyrosine-protein and serine/threonine-protein kinase that is implicated in cell spreading and migration, cell survival, cell growth and proliferation. Transduces extracellular signals to cytosolic and nuclear effectors. Phosphorylates AKT1, AR, MCF2, WASL and WWOX. Implicated in trafficking and clathrin-mediated endocytosis through binding to epidermal growth factor receptor (EGFR) and clathrin. Binds to both poly- and mono-ubiquitin and regulates ligand-induced degradation of EGFR, thereby contributing to the accumulation of EGFR at the limiting membrane of early endosomes. Downstream effector of CDC42 which mediates CDC42-dependent cell migration via phosphorylation of BCAR1. May be involved both in adult synaptic function and plasticity and in brain development. Activates AKT1 by phosphorylating it on 'Tyr-176'. Phosphorylates AR on 'Tyr-267' and 'Tyr-363', thereby promoting its recruitment to androgen-responsive enhancers (AREs). Phosphorylates WWOX on 'Tyr-287'. Phosphorylates MCF2, thereby enhancing its activity as a guanine nucleotide exchange factor (GEF) toward Rho family proteins. Contributes to the control of AXL receptor levels. Confers metastatic properties on cancer cells and promotes tumor growth by negatively regulating tumor suppressor such as WWOX and positively regulating pro-survival factors such as AKT1 and AR. The chain is Activated CDC42 kinase 1 from Rattus norvegicus (Rat).